Reading from the N-terminus, the 502-residue chain is Type-2 serine--tRNA ligase (502 aa).

Ala-304 contacts L-serine. Cys-306 serves as a coordination point for Zn(2+). Arg-336 provides a ligand contact to L-serine. Residues 336–338 (RYE) and 347–348 (RV) each bind ATP. L-serine-binding positions include 353–355 (RVE) and Gln-400. Residue Glu-355 participates in Zn(2+) binding. Glu-432 contacts ATP. Asn-435 serves as a coordination point for L-serine. Cys-461 serves as a coordination point for Zn(2+). Arg-468 is an ATP binding site.

The protein belongs to the class-II aminoacyl-tRNA synthetase family. Type-2 seryl-tRNA synthetase subfamily. In terms of assembly, homodimer. It depends on Zn(2+) as a cofactor.

It localises to the cytoplasm. It carries out the reaction tRNA(Ser) + L-serine + ATP = L-seryl-tRNA(Ser) + AMP + diphosphate + H(+). It catalyses the reaction tRNA(Sec) + L-serine + ATP = L-seryl-tRNA(Sec) + AMP + diphosphate + H(+). The protein operates within aminoacyl-tRNA biosynthesis; selenocysteinyl-tRNA(Sec) biosynthesis; L-seryl-tRNA(Sec) from L-serine and tRNA(Sec): step 1/1. Catalyzes the attachment of serine to tRNA(Ser). Is also able to aminoacylate tRNA(Sec) with serine, to form the misacylated tRNA L-seryl-tRNA(Sec), which will be further converted into selenocysteinyl-tRNA(Sec). This Methanococcoides burtonii (strain DSM 6242 / NBRC 107633 / OCM 468 / ACE-M) protein is Type-2 serine--tRNA ligase.